A 341-amino-acid chain; its full sequence is N-acetyl-gamma-glutamyl-phosphate reductase (341 aa).

The active site involves Cys-163.

It belongs to the NAGSA dehydrogenase family. Type 1 subfamily.

The protein resides in the cytoplasm. The catalysed reaction is N-acetyl-L-glutamate 5-semialdehyde + phosphate + NADP(+) = N-acetyl-L-glutamyl 5-phosphate + NADPH + H(+). Its pathway is amino-acid biosynthesis; L-arginine biosynthesis; N(2)-acetyl-L-ornithine from L-glutamate: step 3/4. In terms of biological role, catalyzes the NADPH-dependent reduction of N-acetyl-5-glutamyl phosphate to yield N-acetyl-L-glutamate 5-semialdehyde. In Idiomarina loihiensis (strain ATCC BAA-735 / DSM 15497 / L2-TR), this protein is N-acetyl-gamma-glutamyl-phosphate reductase.